Consider the following 322-residue polypeptide: Daunorubicin resistance ATP-binding protein DrrA2 (322 aa).

One can recognise an ABC transporter domain in the interval 6-236 (VRAEAMEKRY…VGGDRIEVVV (231 aa)). Residue 38-45 (GPNGAGKT) participates in ATP binding.

This sequence belongs to the ABC transporter superfamily. Drug exporter-1 (DrugE1) (TC 3.A.1.105) family. In terms of assembly, the complex is probably composed of two ATP-binding proteins (DrrA2) and two transmembrane proteins (DrrB2).

Its subcellular location is the cell membrane. It catalyses the reaction daunorubicin(in) + ATP + H2O = daunorubicin(out) + ADP + phosphate + H(+). Part of the ABC transporter complex DrrA2B2 involved in daunorubicin efflux. Responsible for energy coupling to the transport system. Confers self-resistance to daunorubicin, an antibiotic produced by S.coeruleorubidus. The chain is Daunorubicin resistance ATP-binding protein DrrA2 from Streptomyces coeruleorubidus.